Here is a 1080-residue protein sequence, read N- to C-terminus: uncharacterized protein (1080 aa).

The N-terminal stretch at 1–17 (MHKLLVIIAHIIVCAYA) is a signal peptide. Residues 18 to 1042 (DFTGFDNEAG…KSLDLEMIGK (1025 aa)) lie on the Extracellular side of the membrane. Residues N439, N664, and N875 are each glycosylated (N-linked (GlcNAc...) asparagine; by host). Residues 1043–1063 (IILLIAFVIVFVILLTIGIIT) form a helical membrane-spanning segment. The Cytoplasmic portion of the chain corresponds to 1064–1080 (LVKRHRETLPEDEYLLP).

Its subcellular location is the host membrane. This is an uncharacterized protein from Ostreid herpesvirus 1 (isolate France) (OsHV-1).